We begin with the raw amino-acid sequence, 503 residues long: WD repeat-containing protein 55 homolog (503 aa).

2 disordered regions span residues 1–21 (MHTH…DLDD) and 35–132 (ALVG…DDLD). Composition is skewed to acidic residues over residues 12 to 21 (DADELDDLDD), 40 to 50 (DVSDSDIDEHD), and 78 to 96 (NAED…DEAE). WD repeat units lie at residues 157 to 196 (KLED…NKLL), 201 to 242 (VHSK…KLYE), 244 to 282 (AHDD…PIFE), 285 to 324 (EVED…LYVQ), 327 to 366 (PYEE…YHCD), and 411 to 450 (QHNM…DFGD). The interval 483–503 (TKEDEDNADNNDAAAGPSNSA) is disordered.

This sequence belongs to the WD repeat WDR55 family.

The sequence is that of WD repeat-containing protein 55 homolog from Drosophila persimilis (Fruit fly).